We begin with the raw amino-acid sequence, 229 residues long: GTP-binding protein Di-Ras3 (229 aa).

Residues 44–51 (GTAGVGKS), 63–69 (RHEYLPT), 91–95 (DSKSG), 152–155 (NKSD), and 182–183 (AK) contribute to the GTP site. An Effector region motif is present at residues 66-74 (YLPTIENTY). Cys226 bears the Cysteine methyl ester mark. Residue Cys226 is the site of S-geranylgeranyl cysteine attachment. The propeptide at 227-229 (IIM) is removed in mature form.

It belongs to the small GTPase superfamily. Di-Ras family. As to expression, expressed in normal ovarian and breast epithelial cells but not in ovarian and breast cancers.

The protein localises to the cell membrane. This chain is GTP-binding protein Di-Ras3 (DIRAS3), found in Homo sapiens (Human).